The sequence spans 264 residues: uncharacterized protein (264 aa).

6 consecutive transmembrane segments (helical) span residues L23–I43, F59–L79, L91–L111, F150–L170, A190–W210, and W233–I253.

Its subcellular location is the cell membrane. This is an uncharacterized protein from Mycoplasma genitalium (strain ATCC 33530 / DSM 19775 / NCTC 10195 / G37) (Mycoplasmoides genitalium).